The sequence spans 809 residues: Valine--tRNA ligase (809 aa).

A 'HIGH' region motif is present at residues 60 to 70 (PFTSGELHMGH). The 'KMSKS' region motif lies at 546–550 (RMSKS). Residue K549 coordinates ATP.

The protein belongs to the class-I aminoacyl-tRNA synthetase family. ValS type 2 subfamily.

The protein resides in the cytoplasm. The enzyme catalyses tRNA(Val) + L-valine + ATP = L-valyl-tRNA(Val) + AMP + diphosphate. Catalyzes the attachment of valine to tRNA(Val). As ValRS can inadvertently accommodate and process structurally similar amino acids such as threonine, to avoid such errors, it has a 'posttransfer' editing activity that hydrolyzes mischarged Thr-tRNA(Val) in a tRNA-dependent manner. The protein is Valine--tRNA ligase of Sulfurisphaera tokodaii (strain DSM 16993 / JCM 10545 / NBRC 100140 / 7) (Sulfolobus tokodaii).